A 139-amino-acid chain; its full sequence is NADPH-dependent 7-cyano-7-deazaguanine reductase (139 aa).

The Thioimide intermediate role is filled by cysteine 34. Aspartate 41 serves as the catalytic Proton donor. Residues 56-58 and 75-76 each bind substrate; these read IEL and HE.

This sequence belongs to the GTP cyclohydrolase I family. QueF type 1 subfamily.

Its subcellular location is the cytoplasm. It carries out the reaction 7-aminomethyl-7-carbaguanine + 2 NADP(+) = 7-cyano-7-deazaguanine + 2 NADPH + 3 H(+). The protein operates within tRNA modification; tRNA-queuosine biosynthesis. Catalyzes the NADPH-dependent reduction of 7-cyano-7-deazaguanine (preQ0) to 7-aminomethyl-7-deazaguanine (preQ1). This chain is NADPH-dependent 7-cyano-7-deazaguanine reductase, found in Nitrosomonas eutropha (strain DSM 101675 / C91 / Nm57).